A 147-amino-acid chain; its full sequence is Transcriptional regulator MraZ (147 aa).

2 consecutive SpoVT-AbrB domains span residues 5–50 (AIAL…PLSA) and 79–122 (AQEE…SDAG).

The protein belongs to the MraZ family. In terms of assembly, forms oligomers.

The protein localises to the cytoplasm. It localises to the nucleoid. The protein is Transcriptional regulator MraZ of Aromatoleum aromaticum (strain DSM 19018 / LMG 30748 / EbN1) (Azoarcus sp. (strain EbN1)).